Consider the following 169-residue polypeptide: Nicotinamide-nucleotide adenylyltransferase (169 aa).

This sequence belongs to the archaeal NMN adenylyltransferase family.

The protein resides in the cytoplasm. The enzyme catalyses beta-nicotinamide D-ribonucleotide + ATP + H(+) = diphosphate + NAD(+). The protein operates within cofactor biosynthesis; NAD(+) biosynthesis; NAD(+) from nicotinamide D-ribonucleotide: step 1/1. In Picrophilus torridus (strain ATCC 700027 / DSM 9790 / JCM 10055 / NBRC 100828 / KAW 2/3), this protein is Nicotinamide-nucleotide adenylyltransferase.